We begin with the raw amino-acid sequence, 520 residues long: Cytochrome P450 monooxygenase btcC (520 aa).

The helical transmembrane segment at 2–22 (IFLLTLAGLKVLSIVILFGII) threads the bilayer. Asparagine 177 carries an N-linked (GlcNAc...) asparagine glycan. Cysteine 448 contacts heme. Asparagine 511 carries N-linked (GlcNAc...) asparagine glycosylation.

This sequence belongs to the cytochrome P450 family. The cofactor is heme.

The protein localises to the membrane. Its pathway is secondary metabolite biosynthesis; terpenoid biosynthesis. Its function is as follows. Cytochrome P4590 monooxygenase part of the gene cluster that mediates the biosynthesis of betaestacins. The bifunctional terpene synthase btcA converts isopentenyl diphosphate (IPP) and dimethylallyl diphosphate (DMAPP) into the sesterterpene betaestacin I. The C-terminal prenyltransferase (PT) domain of btcA catalyzes formation of GFPP, whereas the N-terminal terpene cyclase (TC) domain catalyzes the cyclization of GFPP into betaestacin I. The cytochrome P450 monooxygenase btcB oxidizes the C25 methyl group of betaestacin I to yield the carboxylic acid betaestacin IV via the alcohol betaestacin III. The cytochrome P450 monooxygenase btcC further catalyzes the multistep oxidation of betaestacin IV to produce several compounds, including betaestacins Va, Vb, Vc and VI. The polypeptide is Cytochrome P450 monooxygenase btcC (Colletotrichum orbiculare (strain 104-T / ATCC 96160 / CBS 514.97 / LARS 414 / MAFF 240422) (Cucumber anthracnose fungus)).